Here is a 624-residue protein sequence, read N- to C-terminus: Protein NRT1/ PTR FAMILY 6.1 (624 aa).

A disordered region spans residues 1 to 20; that stretch reads MVASEIKSPVSVPETPGSSS. 2 helical membrane passes run 83–100 and 114–134; these read MAYF…FYVM and FLGI…AYLG. T138 bears the Phosphothreonine mark. A run of 10 helical transmembrane segments spans residues 139 to 159, 184 to 204, 230 to 250, 258 to 278, 378 to 398, 422 to 442, 459 to 479, 504 to 524, 537 to 557, and 585 to 605; these read IAIF…GASL, SWQM…AAGI, FFNF…TLVV, WGMA…LFFA, LIPI…YLTL, VFPG…FVPI, VGIG…FENY, WLLI…VGLL, SIGS…ATIL, and CLYW…LWSA.

The protein belongs to the major facilitator superfamily. Proton-dependent oligopeptide transporter (POT/PTR) (TC 2.A.17) family. In terms of tissue distribution, expressed in flower and siliques.

The protein localises to the membrane. The polypeptide is Protein NRT1/ PTR FAMILY 6.1 (NPF6.1) (Arabidopsis thaliana (Mouse-ear cress)).